We begin with the raw amino-acid sequence, 690 residues long: Translation factor GUF1, mitochondrial (690 aa).

The segment at Ser40–Ser68 is disordered. Residues Thr52–Ser68 are compositionally biased toward low complexity. One can recognise a tr-type G domain in the interval Glu89–Val272. Residues Ala98 to Ser105, Asp165 to His169, and Asn219 to Asp222 contribute to the GTP site.

This sequence belongs to the TRAFAC class translation factor GTPase superfamily. Classic translation factor GTPase family. LepA subfamily.

The protein localises to the mitochondrion inner membrane. The enzyme catalyses GTP + H2O = GDP + phosphate + H(+). Its function is as follows. Promotes mitochondrial protein synthesis. May act as a fidelity factor of the translation reaction, by catalyzing a one-codon backward translocation of tRNAs on improperly translocated ribosomes. Binds to mitochondrial ribosomes in a GTP-dependent manner. The protein is Translation factor GUF1, mitochondrial of Sordaria macrospora (strain ATCC MYA-333 / DSM 997 / K(L3346) / K-hell).